The chain runs to 273 residues: 4-hydroxy-3-methylbut-2-enyl diphosphate reductase (273 aa).

Residue C12 participates in [4Fe-4S] cluster binding. 2 residues coordinate (2E)-4-hydroxy-3-methylbut-2-enyl diphosphate: H36 and H70. The dimethylallyl diphosphate site is built by H36 and H70. Isopentenyl diphosphate is bound by residues H36 and H70. C92 contributes to the [4Fe-4S] cluster binding site. (2E)-4-hydroxy-3-methylbut-2-enyl diphosphate is bound at residue H120. Residue H120 participates in dimethylallyl diphosphate binding. Position 120 (H120) interacts with isopentenyl diphosphate. E122 functions as the Proton donor in the catalytic mechanism. (2E)-4-hydroxy-3-methylbut-2-enyl diphosphate is bound at residue T157. C185 contributes to the [4Fe-4S] cluster binding site. S213, S214, N215, and S257 together coordinate (2E)-4-hydroxy-3-methylbut-2-enyl diphosphate. 4 residues coordinate dimethylallyl diphosphate: S213, S214, N215, and S257. Isopentenyl diphosphate is bound by residues S213, S214, N215, and S257.

It belongs to the IspH family. [4Fe-4S] cluster is required as a cofactor.

It carries out the reaction isopentenyl diphosphate + 2 oxidized [2Fe-2S]-[ferredoxin] + H2O = (2E)-4-hydroxy-3-methylbut-2-enyl diphosphate + 2 reduced [2Fe-2S]-[ferredoxin] + 2 H(+). The enzyme catalyses dimethylallyl diphosphate + 2 oxidized [2Fe-2S]-[ferredoxin] + H2O = (2E)-4-hydroxy-3-methylbut-2-enyl diphosphate + 2 reduced [2Fe-2S]-[ferredoxin] + 2 H(+). Its pathway is isoprenoid biosynthesis; dimethylallyl diphosphate biosynthesis; dimethylallyl diphosphate from (2E)-4-hydroxy-3-methylbutenyl diphosphate: step 1/1. The protein operates within isoprenoid biosynthesis; isopentenyl diphosphate biosynthesis via DXP pathway; isopentenyl diphosphate from 1-deoxy-D-xylulose 5-phosphate: step 6/6. In terms of biological role, catalyzes the conversion of 1-hydroxy-2-methyl-2-(E)-butenyl 4-diphosphate (HMBPP) into a mixture of isopentenyl diphosphate (IPP) and dimethylallyl diphosphate (DMAPP). Acts in the terminal step of the DOXP/MEP pathway for isoprenoid precursor biosynthesis. This chain is 4-hydroxy-3-methylbut-2-enyl diphosphate reductase, found in Helicobacter hepaticus (strain ATCC 51449 / 3B1).